Here is a 444-residue protein sequence, read N- to C-terminus: Killer cell immunoglobulin-like receptor 3DL1 (444 aa).

An N-terminal signal peptide occupies residues 1–21 (MSLMVVSMACVGLFLVQRAGP). Over 22–340 (HMGGQDKPFL…SKSGNPRHLH (319 aa)) the chain is Extracellular. Ig-like C2-type domains follow at residues 42–102 (GGHV…HPHS), 137–202 (GERV…VTHT), and 237–300 (GESV…FRHS). 3 disulfide bridges follow: Cys49–Cys95, Cys144–Cys195, and Cys244–Cys293. N-linked (GlcNAc...) asparagine glycans are attached at residues Asn92, Asn179, and Asn273. A disordered region spans residues 315-334 (VTGNPSSSWPSPTEPSSKSG). The span at 319 to 333 (PSSSWPSPTEPSSKS) shows a compositional bias: low complexity. The chain crosses the membrane as a helical span at residues 341–360 (ILIGTSVVIILFILLLFFLL). Residues 361–444 (HLWCSNKKNA…KPRSKVVSCP (84 aa)) are Cytoplasmic-facing. Disordered stretches follow at residues 375–394 (QEPAGNRTANSEDSDEQDPE) and 409–444 (RKITRPSQRPKTPPTDTILYTELPNAKPRSKVVSCP).

Belongs to the immunoglobulin superfamily.

It is found in the cell membrane. Its function is as follows. Receptor on natural killer (NK) cells for HLA Bw4 allele. Inhibits the activity of NK cells thus preventing cell lysis. The sequence is that of Killer cell immunoglobulin-like receptor 3DL1 from Homo sapiens (Human).